Consider the following 301-residue polypeptide: 33 kDa chaperonin (301 aa).

Intrachain disulfides connect Cys-239/Cys-241 and Cys-272/Cys-275.

Belongs to the HSP33 family. Under oxidizing conditions two disulfide bonds are formed involving the reactive cysteines. Under reducing conditions zinc is bound to the reactive cysteines and the protein is inactive.

The protein resides in the cytoplasm. Redox regulated molecular chaperone. Protects both thermally unfolding and oxidatively damaged proteins from irreversible aggregation. Plays an important role in the bacterial defense system toward oxidative stress. This Nostoc punctiforme (strain ATCC 29133 / PCC 73102) protein is 33 kDa chaperonin.